The primary structure comprises 471 residues: Alpha-galactosidase (471 aa).

An N-terminal signal peptide occupies residues 1–18; sequence MSYIYLFITAAAVTGALG. A disulfide bridge links Cys42 with Cys74. 2 residues coordinate substrate: Asp72 and Asp73. A glycan (N-linked (GlcNAc...) asparagine) is linked at Asn82. A disulfide bridge connects residues Cys121 and Cys151. A substrate-binding site is contributed by Lys147. The active-site Nucleophile is Asp149. A glycan (N-linked (GlcNAc...) asparagine) is linked at Asn175. A substrate-binding site is contributed by Arg205. The active-site Proton donor is Asp209. 2 disulfide bridges follow: Cys221–Cys237 and Cys223–Cys230. Gln251 is a binding site for substrate. Residues Asn270, Asn361, Asn370, Asn417, Asn422, Asn435, and Asn454 are each glycosylated (N-linked (GlcNAc...) asparagine).

The protein belongs to the glycosyl hydrolase 27 family. As to quaternary structure, homotetramer.

Its subcellular location is the secreted. It carries out the reaction Hydrolysis of terminal, non-reducing alpha-D-galactose residues in alpha-D-galactosides, including galactose oligosaccharides, galactomannans and galactolipids.. This is Alpha-galactosidase (MEL) from Saccharomyces mikatae (Yeast).